Consider the following 403-residue polypeptide: Soluble calcium-activated nucleotidase 1 (403 aa).

Topologically, residues 1–44 are cytoplasmic; that stretch reads MPIQPFDQREWNEPMHSLRISVGGLPVLASMTKATDPRFRPRWR. A helical; Signal-anchor for type II membrane protein transmembrane segment spans residues 45–61; the sequence is VILTSFVGAALLWLLYS. The Lumenal segment spans residues 62-403; the sequence is HHQTPVSGRP…SVKYEGIEFI (342 aa). N90 carries an N-linked (GlcNAc...) asparagine glycan. 6 residues coordinate Ca(2+): S170, D171, E217, E286, S347, and E398.

It belongs to the apyrase family. Monomer. Homodimer; dimerization is Ca(2+)-dependent. Ca(2+) is required as a cofactor. In terms of tissue distribution, detected in intestine, thymus, heart, lung, spleen, kidney, liver, testis, skeletal muscle and brain.

It localises to the endoplasmic reticulum membrane. It is found in the golgi apparatus. The protein resides in the golgi stack membrane. The catalysed reaction is a ribonucleoside 5'-diphosphate + H2O = a ribonucleoside 5'-phosphate + phosphate + H(+). In terms of biological role, calcium-dependent nucleotidase with a preference for UDP. The order of activity with different substrates is UDP &gt; GDP &gt; IDP &gt;&gt; UTP &gt; CDP = GTP = ITP. Has very low activity towards ADP and even lower activity towards ATP. Does not hydrolyze AMP and GMP. Involved in proteoglycan synthesis. This Rattus norvegicus (Rat) protein is Soluble calcium-activated nucleotidase 1 (Cant1).